An 875-amino-acid polypeptide reads, in one-letter code: Alanine--tRNA ligase (875 aa).

Residues H564, H568, C666, and H670 each contribute to the Zn(2+) site.

This sequence belongs to the class-II aminoacyl-tRNA synthetase family. Homotetramer. The cofactor is Zn(2+).

It is found in the cytoplasm. The catalysed reaction is tRNA(Ala) + L-alanine + ATP = L-alanyl-tRNA(Ala) + AMP + diphosphate. Functionally, catalyzes the attachment of alanine to tRNA(Ala) in a two-step reaction: alanine is first activated by ATP to form Ala-AMP and then transferred to the acceptor end of tRNA(Ala). Also edits incorrectly charged Ser-tRNA(Ala) and Gly-tRNA(Ala) via its editing domain. The protein is Alanine--tRNA ligase of Klebsiella pneumoniae subsp. pneumoniae (strain ATCC 700721 / MGH 78578).